Reading from the N-terminus, the 159-residue chain is Neuroglobin (159 aa).

The Globin domain occupies 3 to 151; it reads KLSEKDKGLI…VVSAMTRGWA (149 aa). The heme b site is built by histidine 66 and histidine 98.

Belongs to the globin family. As to quaternary structure, monomer. Homodimers and homotetramers. Mainly monomeric but also detected as part of homodimers and homotetramers. In terms of tissue distribution, detected in brain, eye and gill, but not in muscle and blood (at protein level). Particularly high expression in the periventral zone of tectum opticum, with significant expression detected in white matter, preglomerular nucleus, posterior tubular nucleus, torus longitudinalis, hypothalamus, pituitary gland, posterior tuberculum, hypothalamus, synencephalon and formatio reticularis. Detected also in brain regions of the visual system, predominantly in parts of tectum opticum and torus semicircularis, area dorsalis telencephali and medulla oblongata. Strong expression observed in sensory epithelium of peripheral olfactory organ, and outer and inner nuclear layers and ganglion cell layer of retina.

The protein localises to the cytoplasm. It is found in the cytosol. It localises to the mitochondrion matrix. It carries out the reaction Fe(III)-heme b-[protein] + nitric oxide + H2O = Fe(II)-heme b-[protein] + nitrite + 2 H(+). Functionally, monomeric globin with a bis-histidyl six-coordinate heme-iron atom through which it can bind dioxygen, carbon monoxide and nitric oxide. Could help transport oxygen and increase its availability to the metabolically active neuronal tissues, though its low quantity in tissues as well as its high affinity for dioxygen, which may limit its oxygen-releasing ability, argue against it. The ferrous/deoxygenated form exhibits a nitrite reductase activity and it could produce nitric oxide which in turn inhibits cellular respiration in response to hypoxia. In its ferrous/deoxygenated state, it may also exhibit GDI (Guanine nucleotide Dissociation Inhibitor) activity toward heterotrimeric G-alpha proteins, thereby regulating signal transduction to facilitate neuroprotective responses in the wake of hypoxia and associated oxidative stress. The protein is Neuroglobin (ngb) of Danio rerio (Zebrafish).